The following is a 643-amino-acid chain: Phosphatidylinositol-3,5-bisphosphate 3-phosphatase MTMR2 (643 aa).

2 stretches are compositionally biased toward polar residues: residues 1–12 (MEKSSSCESLGS) and 23–40 (DSLS…VHTK). Residues 1–56 (MEKSSSCESLGSQPAAARPPSVDSLSSASTSHSENSVHTKSASVVSSDSISTSADN) are disordered. 2 positions are modified to phosphoserine: serine 6 and serine 9. Residues 41–55 (SASVVSSDSISTSAD) show a composition bias toward low complexity. A Phosphoserine modification is found at serine 58. The GRAM domain maps to 68 to 139 (NKLAEMEEPP…GVINRVEKIG (72 aa)). Positions 205 to 580 (GWKLYDPLLE…RHLELWVGYY (376 aa)) constitute a Myotubularin phosphatase domain. Positions 330, 355, and 356 each coordinate a 1,2-diacyl-sn-glycero-3-phospho-(1D-myo-inositol-3,5-bisphosphate). Residues asparagine 330, asparagine 355, and isoleucine 356 each coordinate a 1,2-diacyl-sn-glycero-3-phospho-(1D-myo-inositol-3-phosphate). The Phosphocysteine intermediate role is filled by cysteine 417. Serine 418, aspartate 419, glycine 420, tryptophan 421, aspartate 422, arginine 423, arginine 459, and arginine 463 together coordinate a 1,2-diacyl-sn-glycero-3-phospho-(1D-myo-inositol-3,5-bisphosphate). Serine 418, aspartate 419, glycine 420, tryptophan 421, aspartate 422, and arginine 423 together coordinate a 1,2-diacyl-sn-glycero-3-phospho-(1D-myo-inositol-3-phosphate). Arginine 463 is an a 1,2-diacyl-sn-glycero-3-phospho-(1D-myo-inositol-3-phosphate) binding site. Residues 593–627 (IHNRYKELLAKRAELQKKVEELQREISNRSTSSSE) are a coiled coil. The segment at 615–643 (QREISNRSTSSSERASSPAQCVTPVQTVV) is disordered. A compositionally biased stretch (low complexity) spans 620-631 (NRSTSSSERASS). The segment covering 632–643 (PAQCVTPVQTVV) has biased composition (polar residues).

It belongs to the protein-tyrosine phosphatase family. Non-receptor class myotubularin subfamily. As to quaternary structure, homodimer (via coiled-coil domain). Heterotetramer consisting of one MTMR2 dimer and one SBF2/MTMR13 dimer; specifically in peripheral nerves stabilizes SBF2/MTMR13 at the membranes and increases MTMR2 catalytic activity towards phosphatidylinositol 3,5-bisphosphate and to a lesser extent towards phosphatidylinositol 3-phosphate. Heterodimer with SBF1/MTMR5; acts as an adapter for the phosphatase MTMR2 to regulate MTMR2 catalytic activity and subcellular location. Heterodimer with MTMR12. Post-translationally, phosphorylation at Ser-58 decreases MTMR2 localization to endocytic vesicular structures.

It is found in the cytoplasm. It localises to the early endosome membrane. The protein localises to the perinuclear region. The protein resides in the cell projection. Its subcellular location is the axon. It is found in the endosome membrane. It catalyses the reaction a 1,2-diacyl-sn-glycero-3-phospho-(1D-myo-inositol-3,5-bisphosphate) + H2O = a 1,2-diacyl-sn-glycero-3-phospho-(1D-myo-inositol-5-phosphate) + phosphate. The enzyme catalyses a 1,2-diacyl-sn-glycero-3-phospho-(1D-myo-inositol-3-phosphate) + H2O = a 1,2-diacyl-sn-glycero-3-phospho-(1D-myo-inositol) + phosphate. The catalysed reaction is 1,2-dioctanoyl-sn-glycero-3-phospho-(1-D-myo-inositol-3-phosphate) + H2O = 1,2-dioctanoyl-sn-glycero-3-phospho-(1D-myo-inositol) + phosphate. It carries out the reaction 1,2-dioctanoyl-sn-glycero-3-phospho-(1D-myo-inositol-3,5-bisphosphate) + H2O = 1,2-dioctanoyl-sn-glycero-3-phospho-(1D-myo-inositol-5-phosphate) + phosphate. Functionally, lipid phosphatase that specifically dephosphorylates the D-3 position of phosphatidylinositol 3-phosphate and phosphatidylinositol 3,5-bisphosphate, generating phosphatidylinositol and phosphatidylinositol 5-phosphate. Regulates the level of these phosphoinositides critical for various biological processes including autophagy initiation and autophagosome maturation. This is Phosphatidylinositol-3,5-bisphosphate 3-phosphatase MTMR2 from Pongo abelii (Sumatran orangutan).